The primary structure comprises 446 residues: Transcription factor Dp-2 (446 aa).

The residue at position 2 (threonine 2) is an N-acetylthreonine. Serine 24 and serine 42 each carry phosphoserine; by CDK2. Residues 60–82 (PQMIISTPQRIANSGSVLIGNPY) form an interaction with CEBPA region. Residues 103 to 118 (SDRKRAREFIDSDFSE) carry the Nuclear localization signal motif. Serine 122 is modified (phosphoserine). Residues 129–210 (GKGLRHFSMK…PTGKKRNQVD (82 aa)) mediate DNA binding. Positions 176–210 (DQENIRRRVYDALNVLMAMNIISSLPTGKKRNQVD) match the DEF box motif. Residues 219 to 292 (NLEIEKQRRI…RKTVIDCSIS (74 aa)) are dimerization. Residues 229–261 (ERIKQKRAQLQELLLQQIAFKNLVQRNRQNEQQ) form a DCB1 region. The interval 274–330 (LPFIIINTSRKTVIDCSISSDKFEYLFNFDNTFEIHDDIEVLKRMGMSFGLESGKCS) is DCB2. A disordered region spans residues 404–446 (LPASNSHQSSSAASHFSESRGETPCSFNDEDEEDEEEDPSSPE). Residues 406–419 (ASNSHQSSSAASHF) show a composition bias toward low complexity. Over residues 431–446 (NDEDEEDEEEDPSSPE) the composition is skewed to acidic residues.

This sequence belongs to the E2F/DP family. In terms of assembly, component of the DRTF1/E2F transcription factor complex. Forms heterodimers with E2F family members. The complex can interact with hypophosphorylated retinoblastoma protein RB1 and related proteins (RBL1 and RBL2) that inhibit the E2F transactivation domain. During the cell cycle, RB becomes phosphorylated in mid-to-late G1 phase, detaches from the DRTF1/E2F complex rendering E2F transcriptionally active. Interacts with GMCL. Component of the DREAM complex (also named LINC complex) at least composed of E2F4, E2F5, LIN9, LIN37, LIN52, LIN54, MYBL1, MYBL2, RBL1, RBL2, RBBP4, TFDP1 and TFDP2. The complex exists in quiescent cells where it represses cell cycle-dependent genes. It dissociates in S phase when LIN9, LIN37, LIN52 and LIN54 form a subcomplex that binds to MYBL2. The complex TFDP2:E2F1 interacts with CEBPA; the interaction prevents CEBPA binding to target gene promoters and represses its transcriptional activity. In terms of processing, phosphorylation by E2F1-bound cyclin A-CDK2, in the S phase, inhibits E2F-mediated DNA binding and transactivation. In terms of tissue distribution, expressed in all tissues examined. Highest levels in spleen and heart.

The protein localises to the nucleus. Its function is as follows. Can stimulate E2F-dependent transcription. Binds DNA cooperatively with E2F family members through the E2 recognition site, 5'-TTTC[CG]CGC-3', found in the promoter region of a number of genes whose products are involved in cell cycle regulation or in DNA replication. The TFDP2:E2F complex functions in the control of cell-cycle progression from G1 to S phase. The E2F1:DP complex appears to mediate both cell proliferation and apoptosis. Blocks adipocyte differentiation by repressing CEBPA binding to its target gene promoters. This chain is Transcription factor Dp-2 (Tfdp2), found in Mus musculus (Mouse).